Consider the following 392-residue polypeptide: MKFVDEATIKVDAGDGGNGTVSFWREKFVAKGGPDGGDGGDGGDVYLEADENLNTLIDYRFNRFYDAERGKNGGGTNSTGRRGEDITLKVPVGTRAIDIDTGEKVAELMAHGMKIMVAKGGWHGLGNTRFKSSVNRAPRQKTMGTKGEVRELRLELLLLADVGMLGLPNAGKSTFIRAVSAAKPKVADYPFTTLIPSLGVVRARGNKSFVIADIPGLIEGAAEGAGLGVRFLKHLERCRVLLHVIDILPIDGSDPVQNALTIIDELERYSEKVAGKPRWLLFNKTDLLLEAEADEKIAEILEALAWEGAHFKIAAVSRTGTQEVCNELSDFMDTLPKEIMTDEEKAALKVDFMWDDYHKDAMSGKNVVTEDGDDDDDWDDEEDDGHVIYARD.

The Obg domain occupies Met1–Leu159. The region spanning Ala160–Asp333 is the OBG-type G domain. Residues Gly166 to Ser173, Phe191 to Ile195, Asp213 to Gly216, Asn283 to Asp286, and Ala314 to Val316 each bind GTP. Mg(2+)-binding residues include Ser173 and Thr193. The disordered stretch occupies residues Gly364–Asp392. Positions Glu370–Asp384 are enriched in acidic residues.

Belongs to the TRAFAC class OBG-HflX-like GTPase superfamily. OBG GTPase family. As to quaternary structure, monomer. It depends on Mg(2+) as a cofactor.

The protein localises to the cytoplasm. Functionally, an essential GTPase which binds GTP, GDP and possibly (p)ppGpp with moderate affinity, with high nucleotide exchange rates and a fairly low GTP hydrolysis rate. Plays a role in control of the cell cycle, stress response, ribosome biogenesis and in those bacteria that undergo differentiation, in morphogenesis control. The polypeptide is GTPase Obg (Aliivibrio salmonicida (strain LFI1238) (Vibrio salmonicida (strain LFI1238))).